Here is a 186-residue protein sequence, read N- to C-terminus: Trafficking protein particle complex subunit 3 (186 aa).

The protein belongs to the TRAPP small subunits family. BET3 subfamily. In terms of assembly, homodimer. Part of the multisubunit TRAPP (transport protein particle) complex.

The protein resides in the golgi apparatus. It is found in the cis-Golgi network. The protein localises to the endoplasmic reticulum. In terms of biological role, may play a role in vesicular transport from endoplasmic reticulum to Golgi. The sequence is that of Trafficking protein particle complex subunit 3 (trappc3) from Dictyostelium discoideum (Social amoeba).